Here is a 400-residue protein sequence, read N- to C-terminus: Na(+)/H(+) antiporter NhaA (400 aa).

11 consecutive transmembrane segments (helical) span residues Phe10–Ile30, Ala60–Leu80, Ile95–Phe115, Gly126–Gly146, Val155–Phe175, Asn178–Leu198, Ile218–Ile238, Gly265–Gly285, Ile295–Phe315, Ala334–Ala354, and Leu364–Thr384.

It belongs to the NhaA Na(+)/H(+) (TC 2.A.33) antiporter family.

It localises to the cell inner membrane. It catalyses the reaction Na(+)(in) + 2 H(+)(out) = Na(+)(out) + 2 H(+)(in). Functionally, na(+)/H(+) antiporter that extrudes sodium in exchange for external protons. This is Na(+)/H(+) antiporter NhaA from Psychrobacter arcticus (strain DSM 17307 / VKM B-2377 / 273-4).